A 254-amino-acid polypeptide reads, in one-letter code: Phosphomannomutase (254 aa).

Aspartate 16 acts as the Nucleophile in catalysis. Residues aspartate 16 and aspartate 18 each coordinate Mg(2+). Aspartate 18 functions as the Proton donor/acceptor in the catalytic mechanism. Positions 25, 129, 140, 147, 185, and 187 each coordinate alpha-D-mannose 1-phosphate. Aspartate 216, tyrosine 228, aspartate 230, and threonine 233 together coordinate Mg(2+).

Belongs to the eukaryotic PMM family. In terms of assembly, homodimer.

Its subcellular location is the cytoplasm. It catalyses the reaction alpha-D-mannose 1-phosphate = D-mannose 6-phosphate. Its pathway is nucleotide-sugar biosynthesis; GDP-alpha-D-mannose biosynthesis; alpha-D-mannose 1-phosphate from D-fructose 6-phosphate: step 2/2. Involved in the synthesis of the GDP-mannose and dolichol-phosphate-mannose required for a number of critical mannosyl transfer reactions. Required for maintaining N-linked glycoprotein glycosylation at the neuromuscular junction (NMJ) synaptomatrix, and thus acts in multiple pathways that prevent NMJ structural overgrowth, restrict synaptic bouton differentiation, and limit NMJ neurotransmission strength, in order to maintain viability, coordinate movement, and in adults ensure correct wing positioning. Acts in the NMJ trans-synaptic Wg pathway via glycosylation of synaptic Mmp2 which enables dlp/wg signaling during development. The sequence is that of Phosphomannomutase from Drosophila melanogaster (Fruit fly).